Consider the following 328-residue polypeptide: Malate dehydrogenase (328 aa).

16–22 provides a ligand contact to NAD(+); the sequence is GAAGQIS. The substrate site is built by Arg-97 and Arg-103. NAD(+) is bound by residues Asn-110, Gln-117, and 134–136; that span reads VGN. Substrate-binding residues include Asn-136 and Arg-167. His-192 (proton acceptor) is an active-site residue.

The protein belongs to the LDH/MDH superfamily. MDH type 2 family.

The enzyme catalyses (S)-malate + NAD(+) = oxaloacetate + NADH + H(+). In terms of biological role, catalyzes the reversible oxidation of malate to oxaloacetate. The chain is Malate dehydrogenase from Corynebacterium glutamicum (strain R).